We begin with the raw amino-acid sequence, 300 residues long: NAD kinase (300 aa).

Asp75 (proton acceptor) is an active-site residue. NAD(+) is bound by residues 75–76 (DG), 149–150 (ND), Arg177, Asp179, 190–195 (TAYALS), Ala214, and Gln248.

It belongs to the NAD kinase family. A divalent metal cation serves as cofactor.

The protein resides in the cytoplasm. It carries out the reaction NAD(+) + ATP = ADP + NADP(+) + H(+). Its function is as follows. Involved in the regulation of the intracellular balance of NAD and NADP, and is a key enzyme in the biosynthesis of NADP. Catalyzes specifically the phosphorylation on 2'-hydroxyl of the adenosine moiety of NAD to yield NADP. This Burkholderia pseudomallei (strain K96243) protein is NAD kinase.